An 85-amino-acid chain; its full sequence is MNVSRKELRVLNVLAQGGRILKHKDENGRLTHVACVTPEGWQLSLCTLEVFQQLKRRKLISSVKGGPYLITRLGLQALCGSSKTR.

This sequence belongs to the UPF0386 family.

The chain is UPF0386 protein MXAN_1729 from Myxococcus xanthus (strain DK1622).